A 122-amino-acid chain; its full sequence is Glucagon-2 (122 aa).

The signal sequence occupies residues 1–21; it reads MTSLHSLAGLLLLMIIQSSWQ. Propeptides lie at residues 83-86 and Glu122; that span reads NGLF.

This sequence belongs to the glucagon family.

The protein localises to the secreted. Functionally, promotes hydrolysis of glycogen and lipids, and raises the blood sugar level. This Lophius americanus (American angler) protein is Glucagon-2 (gcg2).